Consider the following 524-residue polypeptide: Na(+)/H(+) antiporter NhaB (524 aa).

A run of 12 helical transmembrane segments spans residues 23-43 (IAILAFLIINPLVFSLSPFYA), 44-64 (GWLLVIEFIFTLAMALKCYPL), 97-117 (LLLIFMVAGIYFMKQLLLFVF), 120-140 (LLLNIRSKIVLSLAFCLAAAF), 144-164 (FLDALTVIAVVISVAVGFYGI), 203-223 (LLMHAGVGTALGGVMTMVGEP), 236-256 (FVSFLLRMAPVTVPVFCCGIL), 304-324 (ALVGVWLVSALAFHLAEVGLI), 354-374 (FTALLTVFFSIVAVIIDQHLF), 392-412 (LFYLFNGLLSSISDNVFVGTV), 448-468 (ATPNGQAAFLFLLTSALAPLI), and 476-496 (VWMALPYTVVMTLVGLLCVIF).

This sequence belongs to the NhaB Na(+)/H(+) (TC 2.A.34) antiporter family.

It is found in the cell inner membrane. It carries out the reaction 2 Na(+)(in) + 3 H(+)(out) = 2 Na(+)(out) + 3 H(+)(in). Na(+)/H(+) antiporter that extrudes sodium in exchange for external protons. The polypeptide is Na(+)/H(+) antiporter NhaB (Edwardsiella ictaluri (strain 93-146)).